A 158-amino-acid chain; its full sequence is SsrA-binding protein (158 aa).

The segment at 135-158 (DKRKTLKDRDWERDKQRGFKKDLD) is disordered. Basic and acidic residues predominate over residues 141 to 158 (KDRDWERDKQRGFKKDLD).

This sequence belongs to the SmpB family.

Its subcellular location is the cytoplasm. In terms of biological role, required for rescue of stalled ribosomes mediated by trans-translation. Binds to transfer-messenger RNA (tmRNA), required for stable association of tmRNA with ribosomes. tmRNA and SmpB together mimic tRNA shape, replacing the anticodon stem-loop with SmpB. tmRNA is encoded by the ssrA gene; the 2 termini fold to resemble tRNA(Ala) and it encodes a 'tag peptide', a short internal open reading frame. During trans-translation Ala-aminoacylated tmRNA acts like a tRNA, entering the A-site of stalled ribosomes, displacing the stalled mRNA. The ribosome then switches to translate the ORF on the tmRNA; the nascent peptide is terminated with the 'tag peptide' encoded by the tmRNA and targeted for degradation. The ribosome is freed to recommence translation, which seems to be the essential function of trans-translation. The chain is SsrA-binding protein from Psychrobacter cryohalolentis (strain ATCC BAA-1226 / DSM 17306 / VKM B-2378 / K5).